The primary structure comprises 461 residues: Bifunctional enzyme LpxC/FabZ (461 aa).

A UDP-3-O-acyl-N-acetylglucosamine deacetylase region spans residues 1–302; sequence MLKQKTLKDS…FARQMRKEIR (302 aa). Zn(2+)-binding residues include His78, His260, and Asp264. His287 functions as the Proton donor in the catalytic mechanism. The segment at 303–461 is 3-hydroxyacyl-[acyl-carrier-protein] dehydratase; sequence LHEIQAPTYD…EFMAQIVKNK (159 aa). The active site involves His364.

The protein in the N-terminal section; belongs to the LpxC family. In the C-terminal section; belongs to the thioester dehydratase family. The cofactor is Zn(2+).

It is found in the cytoplasm. The catalysed reaction is a UDP-3-O-[(3R)-3-hydroxyacyl]-N-acetyl-alpha-D-glucosamine + H2O = a UDP-3-O-[(3R)-3-hydroxyacyl]-alpha-D-glucosamine + acetate. The enzyme catalyses a (3R)-hydroxyacyl-[ACP] = a (2E)-enoyl-[ACP] + H2O. Its pathway is glycolipid biosynthesis; lipid IV(A) biosynthesis; lipid IV(A) from (3R)-3-hydroxytetradecanoyl-[acyl-carrier-protein] and UDP-N-acetyl-alpha-D-glucosamine: step 2/6. Its function is as follows. Catalyzes the hydrolysis of UDP-3-O-myristoyl-N-acetylglucosamine to form UDP-3-O-myristoylglucosamine and acetate, the committed step in lipid A biosynthesis. In terms of biological role, involved in unsaturated fatty acids biosynthesis. Catalyzes the dehydration of short chain beta-hydroxyacyl-ACPs and long chain saturated and unsaturated beta-hydroxyacyl-ACPs. This Bacteroides thetaiotaomicron (strain ATCC 29148 / DSM 2079 / JCM 5827 / CCUG 10774 / NCTC 10582 / VPI-5482 / E50) protein is Bifunctional enzyme LpxC/FabZ (lpxC/fabZ).